A 342-amino-acid chain; its full sequence is Dihydroorotase (342 aa).

The Zn(2+) site is built by histidine 13 and histidine 15. Substrate is bound by residues 15-17 (HLR) and asparagine 41. Zn(2+) is bound by residues lysine 99, histidine 136, and histidine 174. Residue lysine 99 is modified to N6-carboxylysine. Residue histidine 136 participates in substrate binding. Leucine 218 is a binding site for substrate. Residue aspartate 246 participates in Zn(2+) binding. Aspartate 246 is an active-site residue. Substrate-binding residues include histidine 250 and alanine 262.

Belongs to the metallo-dependent hydrolases superfamily. DHOase family. Class II DHOase subfamily. Homodimer. Zn(2+) is required as a cofactor.

It carries out the reaction (S)-dihydroorotate + H2O = N-carbamoyl-L-aspartate + H(+). It participates in pyrimidine metabolism; UMP biosynthesis via de novo pathway; (S)-dihydroorotate from bicarbonate: step 3/3. Catalyzes the reversible cyclization of carbamoyl aspartate to dihydroorotate. The chain is Dihydroorotase from Synechocystis sp. (strain ATCC 27184 / PCC 6803 / Kazusa).